A 138-amino-acid chain; its full sequence is MIKCTRRIEFDAGHRIIEHQNKCQFLHGHRYVLEIAIAANKTDKLGMVIDFGLIKDLAKKWIDENFDHSLILHQDDKEMGQQIENCTGQKIYYMQNNPTAENIATHLKNEIFPKLFVSQNFFVTSLKLYETPNCFVEV.

His14 is a binding site for Zn(2+). The Proton acceptor role is filled by Cys23. His27 and His29 together coordinate Zn(2+). Active-site charge relay system residues include His68 and Glu130.

The protein belongs to the PTPS family. QueD subfamily. The cofactor is Zn(2+).

It catalyses the reaction 7,8-dihydroneopterin 3'-triphosphate + H2O = 6-carboxy-5,6,7,8-tetrahydropterin + triphosphate + acetaldehyde + 2 H(+). The protein operates within purine metabolism; 7-cyano-7-deazaguanine biosynthesis. In terms of biological role, catalyzes the conversion of 7,8-dihydroneopterin triphosphate (H2NTP) to 6-carboxy-5,6,7,8-tetrahydropterin (CPH4) and acetaldehyde. The sequence is that of 6-carboxy-5,6,7,8-tetrahydropterin synthase (queD) from Rickettsia conorii (strain ATCC VR-613 / Malish 7).